Reading from the N-terminus, the 495-residue chain is Catalase (495 aa).

The tract at residues 1-25 is disordered; that stretch reads MSNNKKLTSLFGAPVSDRENSMTAG. Residues histidine 55 and asparagine 128 contribute to the active site. Heme is bound at residue tyrosine 338.

It belongs to the catalase family. In terms of assembly, homodimer. Requires heme as cofactor.

It carries out the reaction 2 H2O2 = O2 + 2 H2O. Decomposes hydrogen peroxide into water and oxygen; serves to protect cells from the toxic effects of hydrogen peroxide. This chain is Catalase (katA), found in Staphylococcus saprophyticus subsp. saprophyticus (strain ATCC 15305 / DSM 20229 / NCIMB 8711 / NCTC 7292 / S-41).